Here is a 207-residue protein sequence, read N- to C-terminus: 2,3-bisphosphoglycerate-dependent phosphoglycerate mutase (207 aa).

Residues arginine 10 to asparagine 17, threonine 23 to glycine 24, arginine 62, glutamate 89 to tyrosine 92, lysine 100, arginine 116 to arginine 117, and glycine 160 to asparagine 161 each bind substrate. The Tele-phosphohistidine intermediate role is filled by histidine 11. Catalysis depends on glutamate 89, which acts as the Proton donor/acceptor.

Belongs to the phosphoglycerate mutase family. BPG-dependent PGAM subfamily. In terms of assembly, homodimer.

It catalyses the reaction (2R)-2-phosphoglycerate = (2R)-3-phosphoglycerate. The protein operates within carbohydrate degradation; glycolysis; pyruvate from D-glyceraldehyde 3-phosphate: step 3/5. Functionally, catalyzes the interconversion of 2-phosphoglycerate and 3-phosphoglycerate. The chain is 2,3-bisphosphoglycerate-dependent phosphoglycerate mutase from Afipia carboxidovorans (strain ATCC 49405 / DSM 1227 / KCTC 32145 / OM5) (Oligotropha carboxidovorans).